We begin with the raw amino-acid sequence, 310 residues long: tRNA-cytidine(32) 2-sulfurtransferase (310 aa).

The short motif at 48–53 (SGGKDS) is the PP-loop motif element. Positions 123, 126, and 214 each coordinate [4Fe-4S] cluster.

This sequence belongs to the TtcA family. As to quaternary structure, homodimer. Requires Mg(2+) as cofactor. [4Fe-4S] cluster serves as cofactor.

The protein localises to the cytoplasm. The catalysed reaction is cytidine(32) in tRNA + S-sulfanyl-L-cysteinyl-[cysteine desulfurase] + AH2 + ATP = 2-thiocytidine(32) in tRNA + L-cysteinyl-[cysteine desulfurase] + A + AMP + diphosphate + H(+). The protein operates within tRNA modification. Its function is as follows. Catalyzes the ATP-dependent 2-thiolation of cytidine in position 32 of tRNA, to form 2-thiocytidine (s(2)C32). The sulfur atoms are provided by the cysteine/cysteine desulfurase (IscS) system. This chain is tRNA-cytidine(32) 2-sulfurtransferase, found in Vibrio vulnificus (strain CMCP6).